A 279-amino-acid polypeptide reads, in one-letter code: Pantothenate synthetase (279 aa).

26 to 33 (MGNLHEGH) lines the ATP pocket. Histidine 33 (proton donor) is an active-site residue. A (R)-pantoate-binding site is contributed by glutamine 57. Glutamine 57 is a binding site for beta-alanine. Position 144 to 147 (144 to 147 (GKKD)) interacts with ATP. Residue glutamine 150 participates in (R)-pantoate binding. ATP-binding positions include valine 173 and 181 to 184 (LSSR).

It belongs to the pantothenate synthetase family. As to quaternary structure, homodimer.

It is found in the cytoplasm. It catalyses the reaction (R)-pantoate + beta-alanine + ATP = (R)-pantothenate + AMP + diphosphate + H(+). The protein operates within cofactor biosynthesis; (R)-pantothenate biosynthesis; (R)-pantothenate from (R)-pantoate and beta-alanine: step 1/1. In terms of biological role, catalyzes the condensation of pantoate with beta-alanine in an ATP-dependent reaction via a pantoyl-adenylate intermediate. This is Pantothenate synthetase from Burkholderia ambifaria (strain ATCC BAA-244 / DSM 16087 / CCUG 44356 / LMG 19182 / AMMD) (Burkholderia cepacia (strain AMMD)).